The chain runs to 243 residues: Derlin-1.2 (243 aa).

The Cytoplasmic segment spans residues 1-20 (MSSPAEYYKSLPPISKAYGT). Residues 21 to 41 (LCFFTTVLVRLHILNPLFLYL) form a helical membrane-spanning segment. The Lumenal segment spans residues 42 to 54 (YYPRVFKKFEVWR). Residues 55-75 (IFTSFFFLGPFSINFGIRLLM) traverse the membrane as a helical segment. Over 76 to 94 (IARYGVMLEKGAFDKRTAD) the chain is Cytoplasmic. The helical transmembrane segment at 95-115 (FLWMMIFGAISLLVLSVIPQL) threads the bilayer. Topologically, residues 116-155 (NTYVLGLPMVSMLVYVWSRENPNAQINIYGILQLKAFYLP) are lumenal. The chain crosses the membrane as a helical span at residues 156–176 (WVMLLLDVIFGSPLMPGLLGI). Over 177 to 243 (MVGHLYYYFA…FRGRSYRLNQ (67 aa)) the chain is Cytoplasmic.

The protein belongs to the derlin family. In terms of tissue distribution, expressed in roots and endosperm.

The protein resides in the endoplasmic reticulum membrane. Its function is as follows. May be involved in the degradation process of specific misfolded endoplasmic reticulum (ER) luminal proteins. The chain is Derlin-1.2 (DER1.2) from Zea mays (Maize).